A 421-amino-acid chain; its full sequence is Gamma-glutamyl phosphate reductase (421 aa).

The protein belongs to the gamma-glutamyl phosphate reductase family.

It is found in the cytoplasm. The catalysed reaction is L-glutamate 5-semialdehyde + phosphate + NADP(+) = L-glutamyl 5-phosphate + NADPH + H(+). It participates in amino-acid biosynthesis; L-proline biosynthesis; L-glutamate 5-semialdehyde from L-glutamate: step 2/2. Its function is as follows. Catalyzes the NADPH-dependent reduction of L-glutamate 5-phosphate into L-glutamate 5-semialdehyde and phosphate. The product spontaneously undergoes cyclization to form 1-pyrroline-5-carboxylate. In Nitrosospira multiformis (strain ATCC 25196 / NCIMB 11849 / C 71), this protein is Gamma-glutamyl phosphate reductase.